Here is a 441-residue protein sequence, read N- to C-terminus: Fibroleukin (441 aa).

The N-terminal stretch at 1–15 (MKLANWCWLSSTVLA) is a signal peptide. Asn25 carries an N-linked (GlcNAc...) asparagine glycan. A coiled-coil region spans residues 73 to 167 (SRIEEVFKEV…LEKLNLVNMN (95 aa)). Residues 102–128 (QADDSRDPGRNGLLLPGTGAPGETGDN) are disordered. Residues Asn179, Asn237, Asn265, and Asn338 are each glycosylated (N-linked (GlcNAc...) asparagine). The Fibrinogen C-terminal domain occupies 206-438 (VQQHLIYKDC…EVKMMIRPKH (233 aa)).

Homotetramer; disulfide-linked.

The protein localises to the secreted. May play a role in physiologic lymphocyte functions at mucosal sites. The sequence is that of Fibroleukin (FGL2) from Bos taurus (Bovine).